Reading from the N-terminus, the 435-residue chain is MAGGRPRPPRGFRDFPPEVMILRKRLLSRLERVFESYGFDPLDTPAVEYWETLSGKYGEEAESRLIWRFQDPWSGRWYALRYDLTVPLARFVASNPGLPMPFKRYHIGKVWRHEEPQKGRYREFVQCDADIVGSPYPEADAEIVSLAVDSIDALGLPGFRVRVNDRRLLAGVFEEELGFDNPLPIYRAIDKLDKIGVEGVRRELERLGLPGSTVERIMEIISWRGRPGEVLESVRRGYGSNEKVREALDHLEEMLSLADDKRVELDMSLVRGLDYYTGPILEVVLDEPRIGSVAGGGRYDGLVGMFAGRDIPATGVSIGIERIIDAGLELGVYSLDVKTVAQVAVVVLDRRYYRYAWEAARILRRGGLNVRIDLSRASGQVQRRKASRLGIPVLAFVGAKEAEGGFLTLYSAAKGERVAVPLGEAVKAVERLLPS.

It belongs to the class-II aminoacyl-tRNA synthetase family.

The protein localises to the cytoplasm. It catalyses the reaction tRNA(His) + L-histidine + ATP = L-histidyl-tRNA(His) + AMP + diphosphate + H(+). The protein is Histidine--tRNA ligase (hisS) of Aeropyrum pernix (strain ATCC 700893 / DSM 11879 / JCM 9820 / NBRC 100138 / K1).